The following is a 216-amino-acid chain: Pyrophosphatase PpaX (216 aa).

Aspartate 9 acts as the Nucleophile in catalysis.

This sequence belongs to the HAD-like hydrolase superfamily. PpaX family. The cofactor is Mg(2+).

The catalysed reaction is diphosphate + H2O = 2 phosphate + H(+). Hydrolyzes pyrophosphate formed during P-Ser-HPr dephosphorylation by HPrK/P. Might play a role in controlling the intracellular pyrophosphate pool. The chain is Pyrophosphatase PpaX from Bacillus cereus (strain Q1).